Reading from the N-terminus, the 169-residue chain is MRDEDLVVMGFVRGAFGIKGWVKIHADTEYADGLFDYPTWWLGKNGSWKPYAFENGAVQPKALAAKLEGVDDRDAAEALRGTQIAIPRSELPEAGDGEYYWADLIGLSVVNQQGETLGKVDSLLETGANDVLVVKGGDGQQRLIPFVDQYVLEVVPAEGRILVDWGLDY.

In terms of domain architecture, PRC barrel spans 96 to 169 (DGEYYWADLI…RILVDWGLDY (74 aa)).

It belongs to the RimM family. In terms of assembly, binds ribosomal protein uS19.

The protein localises to the cytoplasm. In terms of biological role, an accessory protein needed during the final step in the assembly of 30S ribosomal subunit, possibly for assembly of the head region. Essential for efficient processing of 16S rRNA. May be needed both before and after RbfA during the maturation of 16S rRNA. It has affinity for free ribosomal 30S subunits but not for 70S ribosomes. This is Ribosome maturation factor RimM from Chromobacterium violaceum (strain ATCC 12472 / DSM 30191 / JCM 1249 / CCUG 213 / NBRC 12614 / NCIMB 9131 / NCTC 9757 / MK).